A 111-amino-acid polypeptide reads, in one-letter code: Cytochrome bo(3) ubiquinol oxidase subunit 4 (111 aa).

The Cytoplasmic portion of the chain corresponds to methionine 1–glycine 17. The chain crosses the membrane as a helical span at residues serine 18–methionine 38. Residues aspartate 39–alanine 46 lie on the Periplasmic side of the membrane. The chain crosses the membrane as a helical span at residues threonine 47–leucine 67. Residues histidine 68 to methionine 80 are Cytoplasmic-facing. A helical transmembrane segment spans residues alanine 81–phenylalanine 101. The Periplasmic portion of the chain corresponds to serine 102–proline 111.

Belongs to the cytochrome c oxidase bacterial subunit 4 family. Heterooctamer of two A chains, two B chains, two C chains and two D chains.

The protein localises to the cell inner membrane. In terms of biological role, cytochrome bo(3) ubiquinol terminal oxidase is the component of the aerobic respiratory chain of E.coli that predominates when cells are grown at high aeration. Has proton pump activity across the membrane in addition to electron transfer, pumping 2 protons/electron. This is Cytochrome bo(3) ubiquinol oxidase subunit 4 (cyoD) from Pseudomonas aeruginosa (strain ATCC 15692 / DSM 22644 / CIP 104116 / JCM 14847 / LMG 12228 / 1C / PRS 101 / PAO1).